Reading from the N-terminus, the 201-residue chain is Putative manganese efflux pump MntP (201 aa).

The next 5 helical transmembrane spans lie at 6-26 (CLAV…ATGI), 39-59 (LAFH…TLGL), 105-125 (LTLI…GLSL), 127-147 (VLGI…LLFT), and 169-189 (LAGG…HGVF).

Belongs to the MntP (TC 9.B.29) family.

Its subcellular location is the cell inner membrane. Its function is as follows. Probably functions as a manganese efflux pump. The chain is Putative manganese efflux pump MntP from Nitratidesulfovibrio vulgaris (strain ATCC 29579 / DSM 644 / CCUG 34227 / NCIMB 8303 / VKM B-1760 / Hildenborough) (Desulfovibrio vulgaris).